The primary structure comprises 186 residues: Threonylcarbamoyl-AMP synthase (186 aa).

The YrdC-like domain maps to 2–186 (STEFEQAVAA…ARTGAVIRPS (185 aa)).

The protein belongs to the SUA5 family. TsaC subfamily.

The protein resides in the cytoplasm. The enzyme catalyses L-threonine + hydrogencarbonate + ATP = L-threonylcarbamoyladenylate + diphosphate + H2O. Required for the formation of a threonylcarbamoyl group on adenosine at position 37 (t(6)A37) in tRNAs that read codons beginning with adenine. Catalyzes the conversion of L-threonine, HCO(3)(-)/CO(2) and ATP to give threonylcarbamoyl-AMP (TC-AMP) as the acyladenylate intermediate, with the release of diphosphate. The chain is Threonylcarbamoyl-AMP synthase from Aeromonas salmonicida (strain A449).